A 90-amino-acid chain; its full sequence is Protein LIM3 (90 aa).

A signal peptide spans 1-26 (MAAVKFLVCSVLLVVLATQSEIGLAQ). Disulfide bonds link Cys28–Cys65, Cys38–Cys54, Cys55–Cys80, and Cys67–Cys87.

Belongs to the A9/FIL1 family.

It is found in the secreted. In Lilium longiflorum (Trumpet lily), this protein is Protein LIM3 (LIM3).